Consider the following 202-residue polypeptide: MVLRGRAVLLAVLLAAGSLGRWAQKPRGAPSAISAIQPKANFDAQQFAGTWLLAAVGSACHFLQEQGHRAEATALHVAPQGAAMAVSTFRKLDGICWQVSQRYGATGVPGRFLLPARGPRGAVHVVAAETDYHSFAVLYLERARQLSVKLYVRSLPVSDSVLGAFEQRVAQANLTQDQVLFFPTYGFCEAADQFHILDEVRR.

The first 23 residues, 1–23 (MVLRGRAVLLAVLLAAGSLGRWA), serve as a signal peptide directing secretion. A disulfide bridge links Cys-96 with Cys-188. Residue Asn-173 is glycosylated (N-linked (GlcNAc...) asparagine).

Belongs to the calycin superfamily. Lipocalin family. In terms of assembly, heterotrimer of 3 chains: alpha (C8A), beta (C8B) and gamma (C8G); the alpha and gamma chains are disulfide bonded. Component of the membrane attack complex (MAC), composed of complement C5b, C6, C7, C8A, C8B, C8G and multiple copies of the pore-forming subunit C9.

It is found in the secreted. The protein resides in the target cell membrane. With respect to regulation, membrane attack complex (MAC) assembly is inhibited by CD59, thereby protecting self-cells from damage during complement activation. MAC assembly is also inhibited by clusterin (CLU) chaperones that inhibit polymerization of C9. Component of the membrane attack complex (MAC), a multiprotein complex activated by the complement cascade, which inserts into a target cell membrane and forms a pore, leading to target cell membrane rupture and cell lysis. The MAC is initiated by proteolytic cleavage of C5 into complement C5b in response to the classical, alternative, lectin and GZMK complement pathways. The complement pathways consist in a cascade of proteins that leads to phagocytosis and breakdown of pathogens and signaling that strengthens the adaptive immune system. C8G, together with C8A and C8B, inserts into the target membrane, but does not form pores by itself. During MAC assembly, associates with C5b, C6 and C7 to form the C5b8 intermediate complex that inserts into the target membrane and traverses the bilayer increasing membrane rigidity. The sequence is that of Complement component C8 gamma chain (C8G) from Oryctolagus cuniculus (Rabbit).